We begin with the raw amino-acid sequence, 180 residues long: Progesterone receptor (180 aa).

An NR C4-type zinc finger spans residues 1-11 (KNCPACRLRKC). The nuclear receptor DNA-binding region spans 1-16 (KNCPACRLRKCCQAGM). Ser60 carries the post-translational modification Phosphoserine. The 118-residue stretch at 63–180 (QEIQLFPPLI…QRMKESSFYS (118 aa)) folds into the NR LBD domain. The AF2; mediates transcriptional activation stretch occupies residues 71 to 180 (LINLLLSIEP…QRMKESSFYS (110 aa)). Residue Arg150 coordinates progesterone.

The protein belongs to the nuclear hormone receptor family. NR3 subfamily. In terms of assembly, interacts with SMARD1 and UNC45A. Interacts with CUEDC2; the interaction promotes ubiquitination, decreases sumoylation, and represses transcriptional activity. Interacts with PIAS3; the interaction promotes sumoylation of PR in a hormone-dependent manner, inhibits DNA-binding, and alters nuclear export. Interacts with SP1; the interaction requires ligand-induced phosphorylation by ERK1/2-MAPK. Interacts with PRMT2. Interacts with NCOA2 and NCOA1. Interacts with KLF9. Interacts with GTF2B. Post-translationally, phosphorylated on multiple serine sites. Several of these sites are hormone-dependent. In terms of processing, sumoylation is hormone-dependent and represses transcriptional activity. Sumoylation on all three sites is enhanced by PIAS3. Desumoylated by SENP1. Sumoylation is repressed by ubiquitination and modulated by phosphorylation. Ubiquitination is hormone-dependent and represses sumoylation. Post-translationally, palmitoylated by ZDHHC7 and ZDHHC21. Palmitoylation is required for plasma membrane targeting and for rapid intracellular signaling via ERK and AKT kinases and cAMP generation.

It localises to the nucleus. The protein resides in the cytoplasm. The steroid hormones and their receptors are involved in the regulation of eukaryotic gene expression and affect cellular proliferation and differentiation in target tissues. Transcriptional activator of several progesteron-dependent promoters in a variety of cell types. Involved in activation of SRC-dependent MAPK signaling on hormone stimulation. The polypeptide is Progesterone receptor (PGR) (Notamacropus eugenii (Tammar wallaby)).